A 424-amino-acid chain; its full sequence is UDP-N-acetylglucosamine 1-carboxyvinyltransferase (424 aa).

22-23 is a binding site for phosphoenolpyruvate; the sequence is KN. Arg-98 contacts UDP-N-acetyl-alpha-D-glucosamine. Cys-122 serves as the catalytic Proton donor. Residue Cys-122 is modified to 2-(S-cysteinyl)pyruvic acid O-phosphothioketal. UDP-N-acetyl-alpha-D-glucosamine is bound by residues 127 to 131, Asp-312, and Ile-334; that span reads RPVDQ.

The protein belongs to the EPSP synthase family. MurA subfamily.

The protein resides in the cytoplasm. It carries out the reaction phosphoenolpyruvate + UDP-N-acetyl-alpha-D-glucosamine = UDP-N-acetyl-3-O-(1-carboxyvinyl)-alpha-D-glucosamine + phosphate. Its pathway is cell wall biogenesis; peptidoglycan biosynthesis. Cell wall formation. Adds enolpyruvyl to UDP-N-acetylglucosamine. The protein is UDP-N-acetylglucosamine 1-carboxyvinyltransferase of Xanthomonas euvesicatoria pv. vesicatoria (strain 85-10) (Xanthomonas campestris pv. vesicatoria).